Reading from the N-terminus, the 400-residue chain is Phosphoglycerate kinase (400 aa).

Residues 21 to 23 (DFN), arginine 37, 60 to 63 (HFGR), arginine 119, and arginine 152 each bind substrate. Residues lysine 205, glycine 296, glutamate 327, and 353–356 (GGDT) each bind ATP.

This sequence belongs to the phosphoglycerate kinase family. In terms of assembly, monomer.

The protein resides in the cytoplasm. The enzyme catalyses (2R)-3-phosphoglycerate + ATP = (2R)-3-phospho-glyceroyl phosphate + ADP. Its pathway is carbohydrate degradation; glycolysis; pyruvate from D-glyceraldehyde 3-phosphate: step 2/5. This Aliarcobacter butzleri (strain RM4018) (Arcobacter butzleri) protein is Phosphoglycerate kinase.